A 98-amino-acid chain; its full sequence is MPTFTKEEIVHLGDLARIALTDEEITRLQGDLNVIAESINKVQEVATDDVEPTANPVPLEAYLRPDVPETPLTQAEATAGAPVSEAGMFVAPRILGQE.

Belongs to the GatC family. As to quaternary structure, heterotrimer of A, B and C subunits.

It carries out the reaction L-glutamyl-tRNA(Gln) + L-glutamine + ATP + H2O = L-glutaminyl-tRNA(Gln) + L-glutamate + ADP + phosphate + H(+). The enzyme catalyses L-aspartyl-tRNA(Asn) + L-glutamine + ATP + H2O = L-asparaginyl-tRNA(Asn) + L-glutamate + ADP + phosphate + 2 H(+). Allows the formation of correctly charged Asn-tRNA(Asn) or Gln-tRNA(Gln) through the transamidation of misacylated Asp-tRNA(Asn) or Glu-tRNA(Gln) in organisms which lack either or both of asparaginyl-tRNA or glutaminyl-tRNA synthetases. The reaction takes place in the presence of glutamine and ATP through an activated phospho-Asp-tRNA(Asn) or phospho-Glu-tRNA(Gln). This Bifidobacterium adolescentis (strain ATCC 15703 / DSM 20083 / NCTC 11814 / E194a) protein is Aspartyl/glutamyl-tRNA(Asn/Gln) amidotransferase subunit C.